Reading from the N-terminus, the 542-residue chain is Phenylalanine--tRNA ligase beta subunit (542 aa).

The B5 domain maps to 269–344 (LRRYTVSVSA…MTIGYDKLSP (76 aa)). Mg(2+) contacts are provided by Asp322, Asp328, Glu331, and Glu332.

The protein belongs to the phenylalanyl-tRNA synthetase beta subunit family. Type 2 subfamily. In terms of assembly, tetramer of two alpha and two beta subunits. It depends on Mg(2+) as a cofactor.

It is found in the cytoplasm. It catalyses the reaction tRNA(Phe) + L-phenylalanine + ATP = L-phenylalanyl-tRNA(Phe) + AMP + diphosphate + H(+). This Sulfolobus acidocaldarius (strain ATCC 33909 / DSM 639 / JCM 8929 / NBRC 15157 / NCIMB 11770) protein is Phenylalanine--tRNA ligase beta subunit.